Reading from the N-terminus, the 258-residue chain is UDP-2,3-diacylglucosamine hydrolase (258 aa).

Positions 15, 17, 48, 88, and 123 each coordinate Mn(2+). 88–89 (NR) is a substrate binding site. Substrate is bound by residues Asp131, Ser169, Asn173, Lys176, and His204. Mn(2+) contacts are provided by His204 and His206.

Belongs to the LpxH family. Requires Mn(2+) as cofactor.

It localises to the cell inner membrane. The enzyme catalyses UDP-2-N,3-O-bis[(3R)-3-hydroxytetradecanoyl]-alpha-D-glucosamine + H2O = 2-N,3-O-bis[(3R)-3-hydroxytetradecanoyl]-alpha-D-glucosaminyl 1-phosphate + UMP + 2 H(+). It functions in the pathway glycolipid biosynthesis; lipid IV(A) biosynthesis; lipid IV(A) from (3R)-3-hydroxytetradecanoyl-[acyl-carrier-protein] and UDP-N-acetyl-alpha-D-glucosamine: step 4/6. Functionally, hydrolyzes the pyrophosphate bond of UDP-2,3-diacylglucosamine to yield 2,3-diacylglucosamine 1-phosphate (lipid X) and UMP by catalyzing the attack of water at the alpha-P atom. Involved in the biosynthesis of lipid A, a phosphorylated glycolipid that anchors the lipopolysaccharide to the outer membrane of the cell. The polypeptide is UDP-2,3-diacylglucosamine hydrolase (Bordetella bronchiseptica (strain ATCC BAA-588 / NCTC 13252 / RB50) (Alcaligenes bronchisepticus)).